A 390-amino-acid chain; its full sequence is Succinate--CoA ligase [ADP-forming] subunit beta (390 aa).

The ATP-grasp domain occupies Lys9–Met245. ATP contacts are provided by residues Lys46, Gly53–Gly55, Glu99, Ser102, and Glu107. Mg(2+) contacts are provided by Asn200 and Asp214. Substrate contacts are provided by residues Asn265 and Gly322–Val324.

It belongs to the succinate/malate CoA ligase beta subunit family. As to quaternary structure, heterotetramer of two alpha and two beta subunits. Requires Mg(2+) as cofactor.

It catalyses the reaction succinate + ATP + CoA = succinyl-CoA + ADP + phosphate. The catalysed reaction is GTP + succinate + CoA = succinyl-CoA + GDP + phosphate. It functions in the pathway carbohydrate metabolism; tricarboxylic acid cycle; succinate from succinyl-CoA (ligase route): step 1/1. Functionally, succinyl-CoA synthetase functions in the citric acid cycle (TCA), coupling the hydrolysis of succinyl-CoA to the synthesis of either ATP or GTP and thus represents the only step of substrate-level phosphorylation in the TCA. The beta subunit provides nucleotide specificity of the enzyme and binds the substrate succinate, while the binding sites for coenzyme A and phosphate are found in the alpha subunit. The protein is Succinate--CoA ligase [ADP-forming] subunit beta of Coxiella burnetii (strain RSA 493 / Nine Mile phase I).